The following is a 294-amino-acid chain: UPF0761 membrane protein YPK_4186 (294 aa).

A run of 7 helical transmembrane segments spans residues 44-64 (LLSL…FPMF), 67-87 (ISIK…GDII), 108-128 (GLIV…NIIW), 136-156 (LVFS…LVGA), 185-205 (VFPL…VPTV), 212-232 (ALIG…GFAM), and 246-266 (VLAV…IVLL).

It belongs to the UPF0761 family.

Its subcellular location is the cell inner membrane. The polypeptide is UPF0761 membrane protein YPK_4186 (Yersinia pseudotuberculosis serotype O:3 (strain YPIII)).